The following is a 355-amino-acid chain: Protein RecA (355 aa).

Residue 65–72 (GPESSGKT) participates in ATP binding.

Belongs to the RecA family.

Its subcellular location is the cytoplasm. Functionally, can catalyze the hydrolysis of ATP in the presence of single-stranded DNA, the ATP-dependent uptake of single-stranded DNA by duplex DNA, and the ATP-dependent hybridization of homologous single-stranded DNAs. It interacts with LexA causing its activation and leading to its autocatalytic cleavage. The chain is Protein RecA from Pseudomonas entomophila (strain L48).